The chain runs to 241 residues: UDP-2,3-diacylglucosamine hydrolase (241 aa).

5 residues coordinate Mn(2+): Asp-8, His-10, Asp-41, Asn-78, and His-113. 78–79 (NR) contacts substrate. Residues Asp-121, Ser-159, Asn-163, Lys-166, and His-194 each coordinate substrate. 2 residues coordinate Mn(2+): His-194 and His-196.

Belongs to the LpxH family. Requires Mn(2+) as cofactor.

The protein localises to the cell inner membrane. The enzyme catalyses UDP-2-N,3-O-bis[(3R)-3-hydroxytetradecanoyl]-alpha-D-glucosamine + H2O = 2-N,3-O-bis[(3R)-3-hydroxytetradecanoyl]-alpha-D-glucosaminyl 1-phosphate + UMP + 2 H(+). It functions in the pathway glycolipid biosynthesis; lipid IV(A) biosynthesis; lipid IV(A) from (3R)-3-hydroxytetradecanoyl-[acyl-carrier-protein] and UDP-N-acetyl-alpha-D-glucosamine: step 4/6. In terms of biological role, hydrolyzes the pyrophosphate bond of UDP-2,3-diacylglucosamine to yield 2,3-diacylglucosamine 1-phosphate (lipid X) and UMP by catalyzing the attack of water at the alpha-P atom. Involved in the biosynthesis of lipid A, a phosphorylated glycolipid that anchors the lipopolysaccharide to the outer membrane of the cell. The polypeptide is UDP-2,3-diacylglucosamine hydrolase (Shewanella putrefaciens (strain CN-32 / ATCC BAA-453)).